We begin with the raw amino-acid sequence, 1887 residues long: Nuclear pore membrane glycoprotein 210 (1887 aa).

The signal sequence occupies residues Met-1 to Ala-26. The Perinuclear space portion of the chain corresponds to Lys-27–Gln-1808. 12 N-linked (GlcNAc...) asparagine glycosylation sites follow: Asn-44, Asn-337, Asn-405, Asn-484, Asn-681, Asn-801, Asn-926, Asn-1039, Asn-1116, Asn-1135, Asn-1362, and Asn-1441. One can recognise a BIG2 domain in the interval Phe-1078 to Lys-1151. The chain crosses the membrane as a helical span at residues Val-1809–His-1829. Residues Thr-1830–His-1887 lie on the Cytoplasmic side of the membrane. At Thr-1844 the chain carries Phosphothreonine. The disordered stretch occupies residues Pro-1853–His-1887. A phosphoserine mark is found at Ser-1874, Ser-1877, Ser-1881, and Ser-1886.

The protein belongs to the NUP210 family. Forms dimers and possibly higher-order oligomers. Post-translationally, N-glycosylated, but not all potential glycosylation sites may be used. Contains high-mannose type oligosaccharides. In terms of processing, phosphorylated at Ser-1881 in mitosis specifically; not phosphorylated in interphase. As to expression, ubiquitous expression, with highest levels in lung, liver, pancreas, testis, and ovary, intermediate levels in brain, kidney, and spleen, and lowest levels in heart and skeletal muscle.

It is found in the nucleus. It localises to the nuclear pore complex. Its subcellular location is the nucleus membrane. The protein resides in the endoplasmic reticulum membrane. Its function is as follows. Nucleoporin essential for nuclear pore assembly and fusion, nuclear pore spacing, as well as structural integrity. The sequence is that of Nuclear pore membrane glycoprotein 210 (NUP210) from Homo sapiens (Human).